Here is a 442-residue protein sequence, read N- to C-terminus: Putative mannan endo-1,6-alpha-mannosidase C1198.07c (442 aa).

An N-terminal signal peptide occupies residues 1–19 (MRYLSFFFEFFFLFSFAFA). The Lumenal portion of the chain corresponds to 20-421 (FDFDVTSDDS…TPATKSDKGW (402 aa)). Residues N75, N124, N193, N229, N254, N257, and N356 are each glycosylated (N-linked (GlcNAc...) asparagine). A helical transmembrane segment spans residues 422–442 (AGFLTFAFSFVFLLFSIWLYF).

This sequence belongs to the glycosyl hydrolase 76 family.

It localises to the endoplasmic reticulum membrane. The catalysed reaction is Random hydrolysis of (1-&gt;6)-alpha-D-mannosidic linkages in unbranched (1-&gt;6)-mannans.. The sequence is that of Putative mannan endo-1,6-alpha-mannosidase C1198.07c from Schizosaccharomyces pombe (strain 972 / ATCC 24843) (Fission yeast).